A 266-amino-acid chain; its full sequence is UPF0294 protein YafD (266 aa).

This sequence belongs to the UPF0294 family.

It localises to the cytoplasm. This is UPF0294 protein YafD from Salmonella typhi.